The sequence spans 194 residues: Xanthine phosphoribosyltransferase (194 aa).

The xanthine site is built by L20 and N27. 128-132 (ANGQA) contributes to the 5-phospho-alpha-D-ribose 1-diphosphate binding site. Position 156 (K156) interacts with xanthine.

This sequence belongs to the purine/pyrimidine phosphoribosyltransferase family. Xpt subfamily. As to quaternary structure, homodimer.

The protein resides in the cytoplasm. It carries out the reaction XMP + diphosphate = xanthine + 5-phospho-alpha-D-ribose 1-diphosphate. It functions in the pathway purine metabolism; XMP biosynthesis via salvage pathway; XMP from xanthine: step 1/1. Functionally, converts the preformed base xanthine, a product of nucleic acid breakdown, to xanthosine 5'-monophosphate (XMP), so it can be reused for RNA or DNA synthesis. This chain is Xanthine phosphoribosyltransferase, found in Bacillus licheniformis (strain ATCC 14580 / DSM 13 / JCM 2505 / CCUG 7422 / NBRC 12200 / NCIMB 9375 / NCTC 10341 / NRRL NRS-1264 / Gibson 46).